The following is a 348-amino-acid chain: Dihydroorotase (348 aa).

Zn(2+) is bound by residues histidine 14 and histidine 16. Substrate is bound by residues 16 to 18 and asparagine 42; that span reads HLR. The Zn(2+) site is built by lysine 100, histidine 137, and histidine 175. Lysine 100 is modified (N6-carboxylysine). Histidine 137 is a binding site for substrate. Position 220 (leucine 220) interacts with substrate. Aspartate 248 is a binding site for Zn(2+). Aspartate 248 is a catalytic residue. 2 residues coordinate substrate: histidine 252 and alanine 264.

The protein belongs to the metallo-dependent hydrolases superfamily. DHOase family. Class II DHOase subfamily. Homodimer. Requires Zn(2+) as cofactor.

It catalyses the reaction (S)-dihydroorotate + H2O = N-carbamoyl-L-aspartate + H(+). Its pathway is pyrimidine metabolism; UMP biosynthesis via de novo pathway; (S)-dihydroorotate from bicarbonate: step 3/3. Functionally, catalyzes the reversible cyclization of carbamoyl aspartate to dihydroorotate. The chain is Dihydroorotase from Synechococcus sp. (strain CC9605).